The primary structure comprises 103 residues: Putative membrane protein insertion efficiency factor (103 aa).

The protein belongs to the UPF0161 family.

The protein localises to the cell inner membrane. Could be involved in insertion of integral membrane proteins into the membrane. The sequence is that of Putative membrane protein insertion efficiency factor from Chlamydia caviae (strain ATCC VR-813 / DSM 19441 / 03DC25 / GPIC) (Chlamydophila caviae).